Consider the following 132-residue polypeptide: NADH-quinone oxidoreductase subunit I 1 (132 aa).

4Fe-4S ferredoxin-type domains follow at residues 42–71 (LKVSHDKAKCVACYLCPTVCPAKCITVEAG) and 81–110 (ERYEIDMLRCIFCGYCVEACPVDALKMTGQ). The [4Fe-4S] cluster site is built by Cys-51, Cys-54, Cys-57, Cys-61, Cys-90, Cys-93, Cys-96, and Cys-100.

It belongs to the complex I 23 kDa subunit family. NDH-1 is composed of 14 different subunits. Subunits NuoA, H, J, K, L, M, N constitute the membrane sector of the complex. It depends on [4Fe-4S] cluster as a cofactor.

It is found in the cell inner membrane. The enzyme catalyses a quinone + NADH + 5 H(+)(in) = a quinol + NAD(+) + 4 H(+)(out). Functionally, NDH-1 shuttles electrons from NADH, via FMN and iron-sulfur (Fe-S) centers, to quinones in the respiratory chain. The immediate electron acceptor for the enzyme in this species is believed to be ubiquinone. Couples the redox reaction to proton translocation (for every two electrons transferred, four hydrogen ions are translocated across the cytoplasmic membrane), and thus conserves the redox energy in a proton gradient. The chain is NADH-quinone oxidoreductase subunit I 1 from Geobacter sulfurreducens (strain ATCC 51573 / DSM 12127 / PCA).